The chain runs to 291 residues: Pirin-like protein (291 aa).

This sequence belongs to the pirin family.

Its subcellular location is the nucleus. The polypeptide is Pirin-like protein (Solanum lycopersicum (Tomato)).